Here is a 761-residue protein sequence, read N- to C-terminus: MLRLPRITRRALSSGALAPHFDRPLPPPPPAPPAPLCALPPLTAPDALAPLTRRTVRHADALVARIAAAPAHPDPAELRRVVKNLDRLSDVLCGVIDMCELVRNVHPDPHWVAAAEKTYETLCSFMNQLNTSTGLYDALVATVSHTFPGNPLSPAELRVAQTFLSDFERSGIQLPPGVRAKFVRHSDNILSLGRTFLSFAAAGPSADTPIEIPEPEVLLAGLSSKFVASLPRKKRKGPALLAPGSWEAQMIGRYADNEEARRLVYIGSMREDKDRVYVLETMLKERAELAHVLGKETWADVALSDKMAKTPQNVLQFLTSLATHHRPSAAADVAALQRLKALSTVSRTSSQLPTVHAWDRDHYAEQYAASLLPNGSLPSITPYFSVGTAMSGLSHMLSRLYGISFKPVSVAHGEVWHPSVRRLDVMDEHGKRIGVIYCDLFSRPGKPSAGAAHYTVRCSRRVDDDPSEGDGLPPGWDQHLGKGMEVQGEALHGKEGKYQLPIVVLTTDFGTVEESGPALLGWNDLETLFHEMGHAIHSMIGQTEFHNVSGTRCATDFVELPSILMEHFISSPAVLSTFATHYTTNEPLPIPLIQAHLQLDQSLKALETHSQILMALLDQKYHSIKHGEQLDSTRVWNELQSQVGVIPPVRGTAWQTQFGHLYGYGATYYSYLFDRAIAGKIWSSLFARGRTGPAAANHDPAAAEDILSREGGEAFKEKVLKWGGGRDPWEMVGDVIGGAEGEQVAKGDEKAMELVGRWMIK.

Histidine 530 contacts Zn(2+). Residue glutamate 531 is part of the active site. Residues histidine 534 and histidine 537 each coordinate Zn(2+).

This sequence belongs to the peptidase M3 family. Requires Zn(2+) as cofactor.

It localises to the mitochondrion matrix. It carries out the reaction Release of an N-terminal octapeptide as second stage of processing of some proteins imported into the mitochondrion.. Its function is as follows. Cleaves proteins, imported into the mitochondrion, to their mature size. While most mitochondrial precursor proteins are processed to the mature form in one step by mitochondrial processing peptidase (MPP), the sequential cleavage by MIP of an octapeptide after initial processing by MPP is a required step for a subgroup of nuclear-encoded precursor proteins destined for the matrix or the inner membrane. This is Mitochondrial intermediate peptidase 1 (OCT1) from Cryptococcus neoformans var. neoformans serotype D (strain B-3501A) (Filobasidiella neoformans).